Reading from the N-terminus, the 230-residue chain is Large ribosomal subunit protein uL1 (230 aa).

It belongs to the universal ribosomal protein uL1 family. In terms of assembly, part of the 50S ribosomal subunit.

In terms of biological role, binds directly to 23S rRNA. The L1 stalk is quite mobile in the ribosome, and is involved in E site tRNA release. Protein L1 is also a translational repressor protein, it controls the translation of the L11 operon by binding to its mRNA. In Metamycoplasma arthritidis (strain 158L3-1) (Mycoplasma arthritidis), this protein is Large ribosomal subunit protein uL1.